We begin with the raw amino-acid sequence, 112 residues long: Large ribosomal subunit protein P1 (112 aa).

Residues 80-112 (AAAAPAAESKKEEKKKEEESDQSDDDMGFGLFD) form a disordered region. The span at 87–97 (ESKKEEKKKEE) shows a compositional bias: basic and acidic residues. Residues Ser99 and Ser102 each carry the phosphoserine modification.

This sequence belongs to the eukaryotic ribosomal protein P1/P2 family. P1 and P2 exist as dimers at the large ribosomal subunit.

Functionally, plays an important role in the elongation step of protein synthesis. The polypeptide is Large ribosomal subunit protein P1 (RpLP1) (Drosophila melanogaster (Fruit fly)).